The sequence spans 167 residues: Small ribosomal subunit protein uS3m (167 aa).

The N-terminal 35 residues, 1 to 35 (MAASVCSGLLGPRVLSWSRELPCAWRALHTSPVCA), are a transit peptide targeting the mitochondrion.

This sequence belongs to the universal ribosomal protein uS3 family. As to quaternary structure, component of the mitochondrial small ribosomal subunit (mt-SSU). Mature mammalian 55S mitochondrial ribosomes consist of a small (28S) and a large (39S) subunit. The 28S small subunit contains a 12S ribosomal RNA (12S mt-rRNA) and 30 different proteins. The 39S large subunit contains a 16S rRNA (16S mt-rRNA), a copy of mitochondrial valine transfer RNA (mt-tRNA(Val)), which plays an integral structural role, and 52 different proteins.

It is found in the mitochondrion. The sequence is that of Small ribosomal subunit protein uS3m (MRPS24) from Homo sapiens (Human).